The chain runs to 293 residues: Formamidopyrimidine-DNA glycosylase (293 aa).

The active-site Schiff-base intermediate with DNA is the Pro2. Residue Glu3 is the Proton donor of the active site. Lys58 serves as the catalytic Proton donor; for beta-elimination activity. 3 residues coordinate DNA: His104, Arg123, and Lys166. The FPG-type zinc finger occupies 257–293 (AVYDRESEPCRTKGCGGVVKRFVQNGRSTFCCPKCQK). The active-site Proton donor; for delta-elimination activity is the Arg283.

Belongs to the FPG family. In terms of assembly, monomer. Zn(2+) serves as cofactor.

It catalyses the reaction Hydrolysis of DNA containing ring-opened 7-methylguanine residues, releasing 2,6-diamino-4-hydroxy-5-(N-methyl)formamidopyrimidine.. It carries out the reaction 2'-deoxyribonucleotide-(2'-deoxyribose 5'-phosphate)-2'-deoxyribonucleotide-DNA = a 3'-end 2'-deoxyribonucleotide-(2,3-dehydro-2,3-deoxyribose 5'-phosphate)-DNA + a 5'-end 5'-phospho-2'-deoxyribonucleoside-DNA + H(+). Involved in base excision repair of DNA damaged by oxidation or by mutagenic agents. Acts as a DNA glycosylase that recognizes and removes damaged bases. Has a preference for oxidized purines, such as 7,8-dihydro-8-oxoguanine (8-oxoG). Has AP (apurinic/apyrimidinic) lyase activity and introduces nicks in the DNA strand. Cleaves the DNA backbone by beta-delta elimination to generate a single-strand break at the site of the removed base with both 3'- and 5'-phosphates. The chain is Formamidopyrimidine-DNA glycosylase from Rhodopseudomonas palustris (strain BisA53).